Consider the following 356-residue polypeptide: Na(+)/H(+) exchange regulatory cofactor NHE-RF1 (356 aa).

Residue Ser2 is modified to N-acetylserine. A phosphoserine mark is found at Ser2 and Ser46. Residues 14-94 enclose the PDZ 1 domain; it reads LCCLEKGPNG…AVRLLVVDPE (81 aa). The interval 113–142 is disordered; it reads AQEKSEHTEPPAAADTKKAGDQNEAEKSHL. One can recognise a PDZ 2 domain in the interval 151 to 231; it reads LCTMKKGPNG…EAKLLVVDKE (81 aa). Residues 265-356 form a disordered region; that stretch reads NSREALVEPA…SKKNELFSNL (92 aa). Ser266, Ser277, Ser287, and Ser288 each carry phosphoserine. The span at 272–288 shows a compositional bias: low complexity; that stretch reads EPASESPRPALARSASS. Position 290 is a phosphothreonine (Thr290). 2 positions are modified to phosphoserine: Ser291 and Ser299. The segment covering 307–317 has biased composition (low complexity); sequence EPSSTSSSSDP. A compositionally biased stretch (basic and acidic residues) spans 346–356; that stretch reads WSKKNELFSNL.

Homodimer, and heterodimer with NHERF2. Binds the N-termini of EZR, RDX and MSN. Binds the C-termini of PDGFRA, PDGFRB, ADRB2, NOS2 and CFTR. Binds ARHGAP17, EPI64, RACK1, OPRK1, GNAQ, CTNNB1 and PLCB3. Binds PDZK1. Interacts with CLCN3. Binds the C-terminus of PAG1. In resting T-cells, part of a PAG1-NHERF1-MSN complex which is disrupted upon TCR activation. Forms a complex with CFTR and SLC4A7. Forms a complex with SLC4A7 and ATP6V1B1. Interacts with TRPC4 (via the PDZ-binding domain). Directly interacts with HTR4. Interacts (via the PDZ 1 domain) with PODXL (via the C-terminal PDZ-binding motif DTHL); interaction is not detected in glomerular epithelium cells. Interacts (via the PDZ 1 domain) with PODXL (via the C-terminal PDZ-binding motif DTHL); the interaction take place early in the secretory pathway and is necessary for its apical membrane sorting. Interacts with SLC26A3. Interacts with MCC. Interacts with SLC34A1. Interacts (via the PDZ domains) with SLC26A6 isoform 4 and isoform 5. Interacts (via PDZ domains) with ACE2 (via PDZ-binding motif); the interaction may enhance ACE2 membrane residence.

Its subcellular location is the cytoplasm. It is found in the apical cell membrane. It localises to the cell projection. The protein localises to the filopodium. The protein resides in the ruffle. Its subcellular location is the microvillus. It is found in the endomembrane system. Functionally, scaffold protein that connects plasma membrane proteins with members of the ezrin/moesin/radixin family and thereby helps to link them to the actin cytoskeleton and to regulate their surface expression. Necessary for recycling of internalized ADRB2. Was first known to play a role in the regulation of the activity and subcellular location of SLC9A3. Necessary for cAMP-mediated phosphorylation and inhibition of SLC9A3. Involved in sperm capacitation. May participate in the regulation of the chloride and bicarbonate homeostasis in spermatozoa. May enhance Wnt signaling. May participate in HTR4 targeting to microvilli. Involved in the regulation of phosphate reabsorption in the renal proximal tubules. In Rattus norvegicus (Rat), this protein is Na(+)/H(+) exchange regulatory cofactor NHE-RF1 (Nherf1).